The chain runs to 358 residues: S-adenosylmethionine decarboxylase proenzyme (358 aa).

Residues Glu-11 and Glu-14 contribute to the active site. Ser-71 serves as the catalytic Schiff-base intermediate with substrate; via pyruvic acid. Position 71 is a pyruvic acid (Ser); by autocatalysis (Ser-71). The active-site Proton donor; for catalytic activity is the Cys-85. Active-site proton acceptor; for processing activity residues include Ser-234 and His-247.

It belongs to the eukaryotic AdoMetDC family. The cofactor is pyruvate. Is synthesized initially as an inactive proenzyme. Formation of the active enzyme involves a self-maturation process in which the active site pyruvoyl group is generated from an internal serine residue via an autocatalytic post-translational modification. Two non-identical subunits are generated from the proenzyme in this reaction, and the pyruvate is formed at the N-terminus of the alpha chain, which is derived from the carboxyl end of the proenzyme. The post-translation cleavage follows an unusual pathway, termed non-hydrolytic serinolysis, in which the side chain hydroxyl group of the serine supplies its oxygen atom to form the C-terminus of the beta chain, while the remainder of the serine residue undergoes an oxidative deamination to produce ammonia and the pyruvoyl group blocking the N-terminus of the alpha chain.

The catalysed reaction is S-adenosyl-L-methionine + H(+) = S-adenosyl 3-(methylsulfanyl)propylamine + CO2. It functions in the pathway amine and polyamine biosynthesis; S-adenosylmethioninamine biosynthesis; S-adenosylmethioninamine from S-adenosyl-L-methionine: step 1/1. The sequence is that of S-adenosylmethionine decarboxylase proenzyme (SAMDC) from Solanum chilense (Tomato).